The primary structure comprises 267 residues: Cytochrome b (267 aa).

The next 4 membrane-spanning stretches (helical) occupy residues 4–24 (FGSL…LLAA), 48–69 (WLIR…YLHI), 84–104 (WNTG…GYVL), and 149–169 (FFTL…IHLT). The heme b site is built by histidine 54 and histidine 68. Residues histidine 153 and histidine 167 each coordinate heme b. Position 172 (histidine 172) interacts with a ubiquinone. The next 2 membrane-spanning stretches (helical) occupy residues 197–217 (LKDI…ALFA) and 259–267 (LGGVLALAA).

It belongs to the cytochrome b family. As to quaternary structure, the cytochrome bc1 complex contains 11 subunits: 3 respiratory subunits (MT-CYB, CYC1 and UQCRFS1), 2 core proteins (UQCRC1 and UQCRC2) and 6 low-molecular weight proteins (UQCRH/QCR6, UQCRB/QCR7, UQCRQ/QCR8, UQCR10/QCR9, UQCR11/QCR10 and a cleavage product of UQCRFS1). This cytochrome bc1 complex then forms a dimer. Heme b serves as cofactor.

The protein localises to the mitochondrion inner membrane. Component of the ubiquinol-cytochrome c reductase complex (complex III or cytochrome b-c1 complex) that is part of the mitochondrial respiratory chain. The b-c1 complex mediates electron transfer from ubiquinol to cytochrome c. Contributes to the generation of a proton gradient across the mitochondrial membrane that is then used for ATP synthesis. The protein is Cytochrome b (MT-CYB) of Raphus cucullatus (Dodo).